The sequence spans 647 residues: Solute carrier family 23 member 2 (647 aa).

The span at 1–11 (MMGVGKNTSKS) shows a compositional bias: polar residues. The tract at residues 1–26 (MMGVGKNTSKSVEVGGSTEGKYEEEA) is disordered. Residues 8 to 109 (TSKSVEVGGS…LCIFLGLQHY (102 aa)) are Cytoplasmic-facing. S69 is modified (phosphoserine). T74 bears the Phosphothreonine mark. S77 is subject to Phosphoserine. T78 carries the phosphothreonine modification. S80 bears the Phosphoserine mark. A helical transmembrane segment spans residues 110–130 (LTCFSGTIAVPFLLADAMCVG). Residues 131 to 138 (DDQWATSQ) lie on the Extracellular side of the membrane. The chain crosses the membrane as a helical span at residues 139–159 (LIGTIFFCVGITTLLQTTFGC). R160 is a topological domain (cytoplasmic). The chain crosses the membrane as a helical span at residues 161–181 (LPLFQASAFAFLAPARAILSL). Over 182 to 215 (DKWKCNTTEITVANGTAELLEHIWHPRIQEIQGA) the chain is Extracellular. N187 and N195 each carry an N-linked (GlcNAc...) asparagine glycan. Residues 216–236 (IIMSSLIEVVIGLLGLPGALL) form a helical membrane-spanning segment. Topologically, residues 237–263 (RYIGPLTITPTVALIGLSGFQAAGERA) are cytoplasmic. Residues 264 to 281 (GKHWGIAMLTIFLVLLFS) traverse the membrane as a helical segment. Residues 282-285 (QYAR) lie on the Extracellular side of the membrane. An intramembrane region (helical) is located at residues 286 to 299 (NVKFPLPIYKSKKG). Over 300-306 (WTAYKLQ) the chain is Extracellular. A helical transmembrane segment spans residues 307–327 (LFKMFPIILAILVSWLLCFIF). The Cytoplasmic segment spans residues 328-368 (TVTDVFPSNSTDYGYYARTDARKGVLLVAPWFKVPYPFQWG). A helical membrane pass occupies residues 369-389 (MPTVSAAGVIGMLSAVVASII). At 390–414 (ESIGDYYACARLSCAPPPPIHAINR) the chain is on the extracellular side. A helical membrane pass occupies residues 415 to 435 (GIFVEGLSCVLDGVFGTGNGS). The Cytoplasmic segment spans residues 436 to 458 (TSSSPNIGVLGITKVGSRRVIQY). The chain crosses the membrane as a helical span at residues 459-479 (GAALMLGLGMIGKFSALFASL). Topologically, residues 480-482 (PDP) are extracellular. The chain crosses the membrane as a helical span at residues 483 to 503 (VLGALFCTLFGMITAVGLSNL). The Cytoplasmic portion of the chain corresponds to 504–513 (QFIDLNSSRN). A helical membrane pass occupies residues 514–534 (LFVLGFSIFFGLVLPSYLRQN). Topologically, residues 535–544 (PLVTGITGID) are extracellular. A helical transmembrane segment spans residues 545–565 (QVLNVLLTTAMFVGGCVAFIL). Topologically, residues 566 to 647 (DNTIPGTPEE…SSDKDSQATV (82 aa)) are cytoplasmic. Phosphothreonine is present on T646.

This sequence belongs to the nucleobase:cation symporter-2 (NCS2) (TC 2.A.40) family. As to quaternary structure, interacts with CLSTN3. Phosphorylated. Highly expressed in neural, neuroendocrine, exocrine and endothelial tissues and in osteoblasts. Detected in neurons throughout the central nervous system, in meninges and choroid plexus, in the anterior pituitary, the intermediate lobe, in pancreas, adrenal cortex, gastric glands, and in the inner nuclear layer of the retina.

The protein resides in the cell membrane. It carries out the reaction L-ascorbate(out) + 2 Na(+)(out) = L-ascorbate(in) + 2 Na(+)(in). Functionally, sodium/ascorbate cotransporter. Mediates electrogenic uptake of vitamin C, with a stoichiometry of 2 Na(+) for each ascorbate. The protein is Solute carrier family 23 member 2 (Slc23a2) of Rattus norvegicus (Rat).